The sequence spans 375 residues: Lipid-A-disaccharide synthase (375 aa).

Belongs to the LpxB family.

The catalysed reaction is a lipid X + a UDP-2-N,3-O-bis[(3R)-3-hydroxyacyl]-alpha-D-glucosamine = a lipid A disaccharide + UDP + H(+). The protein operates within bacterial outer membrane biogenesis; LPS lipid A biosynthesis. Its function is as follows. Condensation of UDP-2,3-diacylglucosamine and 2,3-diacylglucosamine-1-phosphate to form lipid A disaccharide, a precursor of lipid A, a phosphorylated glycolipid that anchors the lipopolysaccharide to the outer membrane of the cell. In Pseudomonas putida (strain ATCC 700007 / DSM 6899 / JCM 31910 / BCRC 17059 / LMG 24140 / F1), this protein is Lipid-A-disaccharide synthase.